Here is a 96-residue protein sequence, read N- to C-terminus: UPF0235 protein YggU (96 aa).

Belongs to the UPF0235 family.

The polypeptide is UPF0235 protein YggU (Escherichia coli (strain K12 / MC4100 / BW2952)).